Reading from the N-terminus, the 195-residue chain is AKDKEKKEKKDKKKDDAPAEEAPAAAAAPAEEAAPTPSAAPIHKVGNVFALFKQNQIQEFKEAFTMIDQDRDGIIGPDDLGNIFQQIGREVDPKVVKEMLAESAEKLNFTHFLTLFGEKLHGTDTEGTLRDAFALFDEDKLGYLLEEYVKDLLTNVGDQYNKDEIKQVWKEAPIEGGKFDYVKFVRLIKRGKEEE.

Positions 1–17 (AKDKEKKEKKDKKKDDA) are enriched in basic and acidic residues. Positions 1 to 39 (AKDKEKKEKKDKKKDDAPAEEAPAAAAAPAEEAAPTPSA) are disordered. Over residues 20 to 39 (EEAPAAAAAPAEEAAPTPSA) the composition is skewed to low complexity. 2 EF-hand domains span residues 55–90 (NQIQ…IGRE) and 124–159 (DTEG…VGDQ). The Ca(2+) site is built by D68, D70, D72, and D79.

Myosin is a hexamer of 2 heavy chains and 4 light chains.

In terms of biological role, plays an important role in regulation of muscle cell contractile activity. The polypeptide is Myosin regulatory light chain, striated muscle, 25 kDa isoform (Lumbricus terrestris (Common earthworm)).